Here is a 200-residue protein sequence, read N- to C-terminus: Glutathione S-transferase 1-1 (200 aa).

Residues 1-73 (GSSPCRSVIM…YLVEKYGKTD (73 aa)) enclose the GST N-terminal domain. Residues Ser-2, 43-45 (HTI), and 57-59 (ESR) contribute to the glutathione site. Residues 79–200 (CPKKRAVINQ…AGCLEFKKFF (122 aa)) enclose the GST C-terminal domain.

This sequence belongs to the GST superfamily. Theta family. Homodimer.

It carries out the reaction RX + glutathione = an S-substituted glutathione + a halide anion + H(+). It catalyses the reaction 1,1,1-trichloro-2,2-bis(4-chlorophenyl)ethane = 1,1-dichloro-2,2-bis(4-chlorophenyl)ethylene + chloride + H(+). Its function is as follows. Conjugation of reduced glutathione to a wide number of exogenous and endogenous hydrophobic electrophiles. Has DDT dehydrochlorinase activity. In Drosophila mauritiana (Fruit fly), this protein is Glutathione S-transferase 1-1 (GstD1).